A 120-amino-acid polypeptide reads, in one-letter code: U13-lycotoxin-Ls1d (120 aa).

An N-terminal signal peptide occupies residues 1–16; the sequence is MKILFVLISILYAVYC. The propeptide occupies 17-54; that stretch reads FSSEEDVDSAYLANELEPVEDINSEQYAALEPKEEQER. 4 disulfide bridges follow: Cys56–Cys70, Cys63–Cys76, Cys69–Cys87, and Cys78–Cys85. The 40-residue stretch at 56-95 folds into the Agouti domain; that stretch reads CADMGQDCKDDCDCCLNIATCNCRFGRYFCSCTFGDYQTC.

This sequence belongs to the neurotoxin 05 (agouti) family. In terms of processing, contains 6 disulfide bonds. Expressed by the venom gland.

It localises to the secreted. This Lycosa singoriensis (Wolf spider) protein is U13-lycotoxin-Ls1d.